Reading from the N-terminus, the 250-residue chain is Anti-sigma-L factor RslA (250 aa).

At 1 to 115 (MTMPLRGLGP…VHRRRRRTRL (115 aa)) the chain is on the cytoplasmic side. The chain crosses the membrane as a helical span at residues 116 to 136 (ITWVASSAAAAVLAIGVLVGV). Topologically, residues 137 to 250 (QGHSAAPQRA…TGQVLLQRSL (114 aa)) are extracellular.

Interacts with ECF RNA polymerase sigma factor SigL; this should inhibit the interaction of SigL with the RNA polymerase catalytic core. Post-translationally, probably cleaved within the membrane by Rip1 near the cytoplasmic membrane interface.

Its subcellular location is the cell membrane. An anti-sigma factor for extracytoplasmic function (ECF) sigma factor SigL. ECF sigma factors are held in an inactive form by an anti-sigma factor until released by regulated intramembrane proteolysis (RIP). RIP occurs when an extracytoplasmic signal triggers a concerted proteolytic cascade to transmit information and elicit cellular responses. The membrane-spanning regulatory substrate protein is first cut extracytoplasmically (site-1 protease, S1P), then within the membrane itself (site-2 protease, S2P, Rip1), while cytoplasmic proteases finish degrading the regulatory protein, liberating the sigma factor. This is Anti-sigma-L factor RslA (rslA) from Mycobacterium tuberculosis (strain ATCC 35801 / TMC 107 / Erdman).